We begin with the raw amino-acid sequence, 623 residues long: Glutathione import ATP-binding protein GsiA (623 aa).

ABC transporter domains follow at residues 15–269 (VENL…RALL) and 314–564 (LRVR…RKLL). ATP is bound by residues 49–56 (GESGSGKS) and 357–364 (GESGSGKS).

The protein belongs to the ABC transporter superfamily. Glutathione importer (TC 3.A.1.5.11) family. As to quaternary structure, the complex is composed of two ATP-binding proteins (GsiA), two transmembrane proteins (GsiC and GsiD) and a solute-binding protein (GsiB).

Its subcellular location is the cell inner membrane. It catalyses the reaction glutathione(out) + ATP + H2O = glutathione(in) + ADP + phosphate + H(+). Part of the ABC transporter complex GsiABCD involved in glutathione import. Responsible for energy coupling to the transport system. The sequence is that of Glutathione import ATP-binding protein GsiA from Shigella dysenteriae serotype 1 (strain Sd197).